The sequence spans 290 residues: MENVELLIEALPYIKDFHSTTMVIKIGGHAMVNDRILEDTIKDIVLLYFVGIKPVVVHGGGPEISEKMEKFGLKPKFVEGLRVTDKETMEVVEMVLDGKVNSKIVTTFIRNGGKAVGLSGKDGLLIVARKKEMRMKKGEEEVIIDLGFVGETEFVNPEIIRILLDNGFIPVVSPVATDLAGNTYNLNADVVAGDIAAALKAKKLIMLTDVPGILENPDDKSTLISRIRLSELENMRSKGVIRGGMIPKVDAVIKALKSGVERAHIIDGSRPHSILIELFTKEGIGTMVEP.

Substrate is bound by residues 60–61, arginine 82, and asparagine 185; that span reads GG.

This sequence belongs to the acetylglutamate kinase family. ArgB subfamily.

It localises to the cytoplasm. The enzyme catalyses N-acetyl-L-glutamate + ATP = N-acetyl-L-glutamyl 5-phosphate + ADP. Its pathway is amino-acid biosynthesis; L-arginine biosynthesis; N(2)-acetyl-L-ornithine from L-glutamate: step 2/4. Its function is as follows. Catalyzes the ATP-dependent phosphorylation of N-acetyl-L-glutamate. The polypeptide is Acetylglutamate kinase (Archaeoglobus fulgidus (strain ATCC 49558 / DSM 4304 / JCM 9628 / NBRC 100126 / VC-16)).